The chain runs to 133 residues: FPRL1 inhibitory protein (133 aa).

The N-terminal stretch at 1-28 (MKKNITKTIIASTVIAAGLLTQTNDAKA) is a signal peptide.

It belongs to the CHIPS/FLIPr family.

The protein localises to the secreted. May be involved in countering the first line of host defense mechanisms. Impairs the leukocyte response to FPRL1 agonists by binding directly to host FPRL1. Exerts, in vitro, anti-inflammatory activity by inhibiting calcium mobilization and cell migration toward chemoattractants. The sequence is that of FPRL1 inhibitory protein (flr) from Staphylococcus aureus (strain Newman).